A 191-amino-acid polypeptide reads, in one-letter code: Large ribosomal subunit protein uL5 (191 aa).

This sequence belongs to the universal ribosomal protein uL5 family. Part of the 50S ribosomal subunit; part of the 5S rRNA/L5/L18/L25 subcomplex. Contacts the 5S rRNA and the P site tRNA. Forms a bridge to the 30S subunit in the 70S ribosome.

Functionally, this is one of the proteins that bind and probably mediate the attachment of the 5S RNA into the large ribosomal subunit, where it forms part of the central protuberance. In the 70S ribosome it contacts protein S13 of the 30S subunit (bridge B1b), connecting the 2 subunits; this bridge is implicated in subunit movement. Contacts the P site tRNA; the 5S rRNA and some of its associated proteins might help stabilize positioning of ribosome-bound tRNAs. The polypeptide is Large ribosomal subunit protein uL5 (Micrococcus luteus (strain ATCC 4698 / DSM 20030 / JCM 1464 / CCM 169 / CCUG 5858 / IAM 1056 / NBRC 3333 / NCIMB 9278 / NCTC 2665 / VKM Ac-2230) (Micrococcus lysodeikticus)).